A 343-amino-acid polypeptide reads, in one-letter code: N-acetyl-gamma-glutamyl-phosphate reductase (343 aa).

Residue Cys-146 is part of the active site.

It belongs to the NAGSA dehydrogenase family. Type 1 subfamily.

The protein resides in the cytoplasm. It catalyses the reaction N-acetyl-L-glutamate 5-semialdehyde + phosphate + NADP(+) = N-acetyl-L-glutamyl 5-phosphate + NADPH + H(+). It functions in the pathway amino-acid biosynthesis; L-arginine biosynthesis; N(2)-acetyl-L-ornithine from L-glutamate: step 3/4. In terms of biological role, catalyzes the NADPH-dependent reduction of N-acetyl-5-glutamyl phosphate to yield N-acetyl-L-glutamate 5-semialdehyde. The sequence is that of N-acetyl-gamma-glutamyl-phosphate reductase from Paenarthrobacter aurescens (strain TC1).